Here is a 660-residue protein sequence, read N- to C-terminus: Protein translocase subunit SecA 2 (660 aa).

ATP is bound by residues Gln113, 131–135, and Asp539; that span reads GEGKT.

The protein belongs to the SecA family. In terms of assembly, monomer and homodimer. Part of the essential Sec protein translocation apparatus which comprises SecA, SecYEG and auxiliary proteins SecDF-YajC and YidC.

The protein resides in the cell inner membrane. It localises to the cytoplasm. The enzyme catalyses ATP + H2O + cellular proteinSide 1 = ADP + phosphate + cellular proteinSide 2.. Functionally, part of the Sec protein translocase complex. Interacts with the SecYEG preprotein conducting channel. Has a central role in coupling the hydrolysis of ATP to the transfer of proteins into and across the cell membrane, serving both as a receptor for the preprotein-SecB complex and as an ATP-driven molecular motor driving the stepwise translocation of polypeptide chains across the membrane. The polypeptide is Protein translocase subunit SecA 2 (Bordetella avium (strain 197N)).